We begin with the raw amino-acid sequence, 601 residues long: Oligoendopeptidase F homolog (601 aa).

Position 387 (H387) interacts with Zn(2+). E388 is an active-site residue. Zn(2+)-binding residues include H391 and H394.

The protein belongs to the peptidase M3 family. Zn(2+) serves as cofactor.

Functionally, hydrolyzes peptides containing between 7 and 17 amino acids with a rather wide specificity. The protein is Oligoendopeptidase F homolog (pepF) of Lactococcus lactis subsp. lactis (strain IL1403) (Streptococcus lactis).